A 265-amino-acid chain; its full sequence is Transcription factor Spi-B-like (265 aa).

Positions 1–31 are TAD1 (Acidic); the sequence is MLTLEASQLDGPHPSYMFSDSSFYDLDSCKP. The TAD2 stretch occupies residues 42 to 63; it reads AEPPTDPCAGWLELAEPGYEPF. Residues 127 to 160 are disordered; the sequence is TPLSEDDDFPTDAPALEVSDSDSDENLSPGGSLD. Positions 169-252 form a DNA-binding region, ETS; the sequence is LRLYQFLLGL…VKKKLTYQFG (84 aa).

The protein belongs to the ETS family.

It localises to the nucleus. Its function is as follows. May act as a sequence specific transcriptional activator. This Paleosuchus palpebrosus (Cuvier's smooth-fronted caiman) protein is Transcription factor Spi-B-like.